The chain runs to 219 residues: U-scoloptoxin(11)-Sm7a (219 aa).

A signal peptide spans 1–15 (MYLFLMINYFVLANS).

The protein belongs to the scoloptoxin-11 family. In terms of processing, contains 8 disulfide bonds. As to expression, expressed by the venom gland.

The protein localises to the secreted. This Scolopendra morsitans (Tanzanian blue ringleg centipede) protein is U-scoloptoxin(11)-Sm7a.